The following is a 547-amino-acid chain: DNA ligase (547 aa).

Residue Glu-244 participates in ATP binding. Lys-246 functions as the N6-AMP-lysine intermediate in the catalytic mechanism. ATP is bound by residues Arg-251, Arg-266, Glu-295, Phe-334, Arg-405, and Lys-411.

It belongs to the ATP-dependent DNA ligase family. Requires Mg(2+) as cofactor.

The enzyme catalyses ATP + (deoxyribonucleotide)n-3'-hydroxyl + 5'-phospho-(deoxyribonucleotide)m = (deoxyribonucleotide)n+m + AMP + diphosphate.. In terms of biological role, DNA ligase that seals nicks in double-stranded DNA during DNA replication, DNA recombination and DNA repair. This Methanospirillum hungatei JF-1 (strain ATCC 27890 / DSM 864 / NBRC 100397 / JF-1) protein is DNA ligase.